Consider the following 403-residue polypeptide: Phosphopentomutase (403 aa).

D13, D298, H303, D339, H340, and H351 together coordinate Mn(2+).

The protein belongs to the phosphopentomutase family. Requires Mn(2+) as cofactor.

The protein localises to the cytoplasm. It catalyses the reaction 2-deoxy-alpha-D-ribose 1-phosphate = 2-deoxy-D-ribose 5-phosphate. The catalysed reaction is alpha-D-ribose 1-phosphate = D-ribose 5-phosphate. It functions in the pathway carbohydrate degradation; 2-deoxy-D-ribose 1-phosphate degradation; D-glyceraldehyde 3-phosphate and acetaldehyde from 2-deoxy-alpha-D-ribose 1-phosphate: step 1/2. Isomerase that catalyzes the conversion of deoxy-ribose 1-phosphate (dRib-1-P) and ribose 1-phosphate (Rib-1-P) to deoxy-ribose 5-phosphate (dRib-5-P) and ribose 5-phosphate (Rib-5-P), respectively. This is Phosphopentomutase from Streptococcus suis (strain 05ZYH33).